The sequence spans 51 residues: Large ribosomal subunit protein eL39 (51 aa).

Belongs to the eukaryotic ribosomal protein eL39 family.

This Methanopyrus kandleri (strain AV19 / DSM 6324 / JCM 9639 / NBRC 100938) protein is Large ribosomal subunit protein eL39.